Reading from the N-terminus, the 134-residue chain is Phosphoribosyl-AMP cyclohydrolase (134 aa).

Residue Asp-93 participates in Mg(2+) binding. A Zn(2+)-binding site is contributed by Cys-94. Positions 95 and 97 each coordinate Mg(2+). The Zn(2+) site is built by Cys-112 and Cys-119.

Belongs to the PRA-CH family. Homodimer. Mg(2+) is required as a cofactor. It depends on Zn(2+) as a cofactor.

It is found in the cytoplasm. The enzyme catalyses 1-(5-phospho-beta-D-ribosyl)-5'-AMP + H2O = 1-(5-phospho-beta-D-ribosyl)-5-[(5-phospho-beta-D-ribosylamino)methylideneamino]imidazole-4-carboxamide. The protein operates within amino-acid biosynthesis; L-histidine biosynthesis; L-histidine from 5-phospho-alpha-D-ribose 1-diphosphate: step 3/9. In terms of biological role, catalyzes the hydrolysis of the adenine ring of phosphoribosyl-AMP. In Caulobacter sp. (strain K31), this protein is Phosphoribosyl-AMP cyclohydrolase.